We begin with the raw amino-acid sequence, 49 residues long: Large ribosomal subunit protein bL33A (49 aa).

The protein belongs to the bacterial ribosomal protein bL33 family.

In Levilactobacillus brevis (strain ATCC 367 / BCRC 12310 / CIP 105137 / JCM 1170 / LMG 11437 / NCIMB 947 / NCTC 947) (Lactobacillus brevis), this protein is Large ribosomal subunit protein bL33A.